The chain runs to 90 residues: Small ribosomal subunit protein uS15 (90 aa).

The protein belongs to the universal ribosomal protein uS15 family. Part of the 30S ribosomal subunit. Forms a bridge to the 50S subunit in the 70S ribosome, contacting the 23S rRNA.

Functionally, one of the primary rRNA binding proteins, it binds directly to 16S rRNA where it helps nucleate assembly of the platform of the 30S subunit by binding and bridging several RNA helices of the 16S rRNA. Forms an intersubunit bridge (bridge B4) with the 23S rRNA of the 50S subunit in the ribosome. The sequence is that of Small ribosomal subunit protein uS15 from Wolinella succinogenes (strain ATCC 29543 / DSM 1740 / CCUG 13145 / JCM 31913 / LMG 7466 / NCTC 11488 / FDC 602W) (Vibrio succinogenes).